We begin with the raw amino-acid sequence, 892 residues long: Translation initiation factor IF-2 (892 aa).

The disordered stretch occupies residues lysine 65–glutamine 296. Positions serine 68 to valine 82 are enriched in polar residues. The span at glutamate 99–tryptophan 217 shows a compositional bias: basic and acidic residues. A compositionally biased stretch (polar residues) spans glutamine 224–histidine 237. Basic and acidic residues predominate over residues arginine 239–arginine 254. The segment covering serine 255–asparagine 269 has biased composition (basic residues). Basic and acidic residues predominate over residues lysine 270–alanine 283. The 170-residue stretch at histidine 391–lysine 560 folds into the tr-type G domain. A G1 region spans residues glycine 400–threonine 407. Glycine 400–threonine 407 serves as a coordination point for GTP. Residues glycine 425 to histidine 429 form a G2 region. Positions aspartate 446–glycine 449 are G3. Residues aspartate 446–histidine 450 and asparagine 500–aspartate 503 contribute to the GTP site. The tract at residues asparagine 500–aspartate 503 is G4. Residues serine 536 to lysine 538 form a G5 region.

It belongs to the TRAFAC class translation factor GTPase superfamily. Classic translation factor GTPase family. IF-2 subfamily.

The protein localises to the cytoplasm. One of the essential components for the initiation of protein synthesis. Protects formylmethionyl-tRNA from spontaneous hydrolysis and promotes its binding to the 30S ribosomal subunits. Also involved in the hydrolysis of GTP during the formation of the 70S ribosomal complex. In Yersinia pseudotuberculosis serotype O:1b (strain IP 31758), this protein is Translation initiation factor IF-2.